The sequence spans 455 residues: MYKCALVLAAGQGKRIKSDLPKVLHKVCGKEMLKHVIDSIRKSGIDDIDVIIGKGAELVKERTLDRNVSYSMQAEQLGTGHAVKCAEEFLKDKKGVVAIFTGDTPLIKQSTIERLFNEHIEAKNSATILTAIVNDPTGYGRIVRTNDGVSKIVEHKDCTEEELKINEMNSGIYCFDIELLVDALNKITNNNGQGEYYLTDAIGILKSQGKKIGAVVTEYEETIGVNSRVQLAEAEEILKNRINLMHMENGVTLIDPRTTYIGIDVEIGKDTIIYPNNILEGNTKIGNNCLIYQNSRIVDSNIGNEVDVQASVILNSNIGDNTTVGPFAYIRPETTIGKHARIGDFVEIKKSTIGDGTKVSHLTYIGDAEVGSECNFGCGTVVVNYDGKNKHKTIIGDHSFIGCNTNLVSPVTIHDNTYIAAGSTITSEVKEGDLAVARAKQRNISGWVDKKGLKK.

The interval 1–228 (MYKCALVLAA…YEETIGVNSR (228 aa)) is pyrophosphorylase. UDP-N-acetyl-alpha-D-glucosamine is bound by residues 8-11 (LAAG), Lys-22, Gln-73, and 78-79 (GT). A Mg(2+)-binding site is contributed by Asp-103. 4 residues coordinate UDP-N-acetyl-alpha-D-glucosamine: Gly-140, Glu-154, Asn-169, and Asn-226. Position 226 (Asn-226) interacts with Mg(2+). The tract at residues 229–249 (VQLAEAEEILKNRINLMHMEN) is linker. The segment at 250–455 (GVTLIDPRTT…GWVDKKGLKK (206 aa)) is N-acetyltransferase. Residues Arg-331 and Lys-349 each coordinate UDP-N-acetyl-alpha-D-glucosamine. His-361 serves as the catalytic Proton acceptor. Residues Tyr-364 and Asn-375 each coordinate UDP-N-acetyl-alpha-D-glucosamine. Acetyl-CoA contacts are provided by residues 384–385 (NY), Ala-421, and Arg-438.

This sequence in the N-terminal section; belongs to the N-acetylglucosamine-1-phosphate uridyltransferase family. It in the C-terminal section; belongs to the transferase hexapeptide repeat family. Homotrimer. The cofactor is Mg(2+).

The protein localises to the cytoplasm. The catalysed reaction is alpha-D-glucosamine 1-phosphate + acetyl-CoA = N-acetyl-alpha-D-glucosamine 1-phosphate + CoA + H(+). It carries out the reaction N-acetyl-alpha-D-glucosamine 1-phosphate + UTP + H(+) = UDP-N-acetyl-alpha-D-glucosamine + diphosphate. Its pathway is nucleotide-sugar biosynthesis; UDP-N-acetyl-alpha-D-glucosamine biosynthesis; N-acetyl-alpha-D-glucosamine 1-phosphate from alpha-D-glucosamine 6-phosphate (route II): step 2/2. The protein operates within nucleotide-sugar biosynthesis; UDP-N-acetyl-alpha-D-glucosamine biosynthesis; UDP-N-acetyl-alpha-D-glucosamine from N-acetyl-alpha-D-glucosamine 1-phosphate: step 1/1. It participates in bacterial outer membrane biogenesis; LPS lipid A biosynthesis. Catalyzes the last two sequential reactions in the de novo biosynthetic pathway for UDP-N-acetylglucosamine (UDP-GlcNAc). The C-terminal domain catalyzes the transfer of acetyl group from acetyl coenzyme A to glucosamine-1-phosphate (GlcN-1-P) to produce N-acetylglucosamine-1-phosphate (GlcNAc-1-P), which is converted into UDP-GlcNAc by the transfer of uridine 5-monophosphate (from uridine 5-triphosphate), a reaction catalyzed by the N-terminal domain. This is Bifunctional protein GlmU from Clostridium beijerinckii (strain ATCC 51743 / NCIMB 8052) (Clostridium acetobutylicum).